We begin with the raw amino-acid sequence, 164 residues long: Rhomboid-related protein 1 (164 aa).

4 helical membrane-spanning segments follow: residues 10–30 (GFNALLQLMIGVPLEMVHGVL), 32–52 (ISLLYLAGVLAGSLTVSITDM), 56–76 (VVGGSGGVYALCSAHLANVVM), and 120–140 (PSFMAHLAGAVVGVSMGLTIL). The active-site Nucleophile is Ser-60. The active site involves His-125.

The protein belongs to the peptidase S54 family.

It localises to the membrane. It carries out the reaction Cleaves type-1 transmembrane domains using a catalytic dyad composed of serine and histidine that are contributed by different transmembrane domains.. May be involved in regulated intramembrane proteolysis and the subsequent release of functional polypeptides from their membrane anchors. The polypeptide is Rhomboid-related protein 1 (Rhbdl1) (Rattus norvegicus (Rat)).